A 161-amino-acid chain; its full sequence is RNA pyrophosphohydrolase (161 aa).

The 143-residue stretch at 12–154 folds into the Nudix hydrolase domain; that stretch reads PYRPGVGMMI…KRKLYQAVVK (143 aa). A Nudix box motif is present at residues 46–67; sequence GGIVPGETPSIAAMREMLEEIG.

The protein belongs to the Nudix hydrolase family. RppH subfamily. Requires a divalent metal cation as cofactor.

Its function is as follows. Accelerates the degradation of transcripts by removing pyrophosphate from the 5'-end of triphosphorylated RNA, leading to a more labile monophosphorylated state that can stimulate subsequent ribonuclease cleavage. This Rickettsia bellii (strain OSU 85-389) protein is RNA pyrophosphohydrolase.